The primary structure comprises 73 residues: Translation initiation factor IF-1 (73 aa).

An S1-like domain is found at Met-1 to Arg-73.

The protein belongs to the IF-1 family. In terms of assembly, component of the 30S ribosomal translation pre-initiation complex which assembles on the 30S ribosome in the order IF-2 and IF-3, IF-1 and N-formylmethionyl-tRNA(fMet); mRNA recruitment can occur at any time during PIC assembly.

The protein localises to the cytoplasm. Its function is as follows. One of the essential components for the initiation of protein synthesis. Stabilizes the binding of IF-2 and IF-3 on the 30S subunit to which N-formylmethionyl-tRNA(fMet) subsequently binds. Helps modulate mRNA selection, yielding the 30S pre-initiation complex (PIC). Upon addition of the 50S ribosomal subunit IF-1, IF-2 and IF-3 are released leaving the mature 70S translation initiation complex. The protein is Translation initiation factor IF-1 of Chlamydia caviae (strain ATCC VR-813 / DSM 19441 / 03DC25 / GPIC) (Chlamydophila caviae).